The primary structure comprises 693 residues: Polyribonucleotide nucleotidyltransferase (693 aa).

Positions 489 and 495 each coordinate Mg(2+). The KH domain occupies 556-615 (PQIHVMNINPAKIKDVVGRGGATVKGIVEKTGAQIDTSDSGEVKVFAKDKKSMDMAVAMI). Residues 625-693 (GQVYKGKIVK…GRVKLSLVAR (69 aa)) form the S1 motif domain.

It belongs to the polyribonucleotide nucleotidyltransferase family. As to quaternary structure, component of the RNA degradosome, which is a multiprotein complex involved in RNA processing and mRNA degradation. Mg(2+) serves as cofactor.

It localises to the cytoplasm. The catalysed reaction is RNA(n+1) + phosphate = RNA(n) + a ribonucleoside 5'-diphosphate. In terms of biological role, involved in mRNA degradation. Catalyzes the phosphorolysis of single-stranded polyribonucleotides processively in the 3'- to 5'-direction. This is Polyribonucleotide nucleotidyltransferase from Francisella tularensis subsp. tularensis (strain WY96-3418).